We begin with the raw amino-acid sequence, 506 residues long: NADH-quinone oxidoreductase subunit N 2 (506 aa).

14 helical membrane-spanning segments follow: residues 11 to 31 (SLAY…LVVW), 44 to 64 (LVIL…YFLA), 82 to 102 (FSNL…LFLV), 117 to 137 (SGEL…MAAS), 140 to 160 (LLLI…LAGF), 175 to 195 (VIFG…IFGI), 222 to 242 (VFVG…AAPF), 254 to 274 (PTPV…AVLI), 289 to 309 (GVAT…MTVG), 323 to 345 (LAYS…SGAG), 356 to 376 (YCFM…ESGG), 394 to 414 (AAAM…AGFI), 419 to 439 (LFSA…VVGV), and 472 to 492 (LLGG…VYWG).

It belongs to the complex I subunit 2 family. In terms of assembly, NDH-1 is composed of 14 different subunits. Subunits NuoA, H, J, K, L, M, N constitute the membrane sector of the complex.

The protein resides in the cell inner membrane. The enzyme catalyses a quinone + NADH + 5 H(+)(in) = a quinol + NAD(+) + 4 H(+)(out). NDH-1 shuttles electrons from NADH, via FMN and iron-sulfur (Fe-S) centers, to quinones in the respiratory chain. The immediate electron acceptor for the enzyme in this species is believed to be ubiquinone. Couples the redox reaction to proton translocation (for every two electrons transferred, four hydrogen ions are translocated across the cytoplasmic membrane), and thus conserves the redox energy in a proton gradient. The chain is NADH-quinone oxidoreductase subunit N 2 from Sorangium cellulosum (strain So ce56) (Polyangium cellulosum (strain So ce56)).